The following is a 400-amino-acid chain: Argininosuccinate synthase (400 aa).

Residues 10-18 (AYSGGVDTS) and Ala38 each bind ATP. Tyr89 is an L-citrulline binding site. Position 119 (Gly119) interacts with ATP. The L-aspartate site is built by Thr121, Asn125, and Asp126. Asn125 contributes to the L-citrulline binding site. The L-citrulline site is built by Arg129, Ser177, Ser186, Glu262, and Tyr274.

Belongs to the argininosuccinate synthase family. Type 1 subfamily. Homotetramer.

It localises to the cytoplasm. The catalysed reaction is L-citrulline + L-aspartate + ATP = 2-(N(omega)-L-arginino)succinate + AMP + diphosphate + H(+). Its pathway is amino-acid biosynthesis; L-arginine biosynthesis; L-arginine from L-ornithine and carbamoyl phosphate: step 2/3. This is Argininosuccinate synthase from Nostoc sp. (strain PCC 7120 / SAG 25.82 / UTEX 2576).